Here is a 538-residue protein sequence, read N- to C-terminus: Retinoblastoma-binding protein 5 (538 aa).

WD repeat units follow at residues 22–63 (DCIS…KIIS) and 64–103 (AHIH…CDQR). A Glycyl lysine isopeptide (Lys-Gly) (interchain with G-Cter in SUMO2) cross-link involves residue K129. WD repeat units follow at residues 148–188 (DDDS…LVAS), 196–235 (SNTT…TCGR), 249–291 (VNRT…KILH), and 293–331 (TRGE…NWSA). At T252 the chain carries Phosphothreonine; by CDK1. Residues 330–366 (SAFAPDFKELDENVEYEERESEFDIEDEDKSEPEQTG) form an interaction with ASH2L region. Residues 344 to 360 (EYEERESEFDIEDEDKS) show a composition bias toward acidic residues. The disordered stretch occupies residues 344–377 (EYEERESEFDIEDEDKSEPEQTGADAAEDEEVDV). S350 is modified (phosphoserine). Positions 371-380 (EDEEVDVTSV) are interaction with WDR5. S388 and S389 each carry phosphoserine. Positions 408 to 519 (VEDPEENPYG…LPLEGSTKGK (112 aa)) are disordered. Residues 479-490 (SKKKQAGRPKGS) show a composition bias toward basic residues. Residues 491–510 (KGKEKDSPFKPKLYKGDRGL) show a composition bias toward basic and acidic residues. S497 bears the Phosphoserine; by CDK1 mark. S525 carries the phosphoserine modification.

As to quaternary structure, component of the SET1 complex, at least composed of the catalytic subunit (SETD1A or SETD1B), WDR5, WDR82, RBBP5, ASH2L/ASH2, CXXC1/CFP1, HCFC1 and DPY30. Core component of several methyltransferase-containing complexes including MLL1/MLL, MLL2/3 (also named ASCOM complex) and MLL4/WBP7. Each complex is at least composed of ASH2L, RBBP5, WDR5, DPY30, one or more specific histone methyltransferases (KMT2A/MLL1, KMT2D/MLL2, KMT2C/MLL3 and KMT2B/MLL4), and the facultative components PAGR1, BACC1, CHD8, E2F6, HCFC1, HCFC2, HSP70, INO80C, KDM6A, KANSL1, LAS1L, MAX, MCRS1, MEN1, MGA, MYST1/MOF, NCOA6, PAXIP1/PTIP, PELP1, PHF20, PRP31, RING2, RUVB1/TIP49A, RUVB2/TIP49B, SENP3, TAF1, TAF4, TAF6, TAF7, TAF9, TEX10 and alpha- and beta-tubulin. Component of a histone methylation complex composed of at least ZNF335, RBBP5, ASH2L and WDR5; the complex may have histone H3-specific methyltransferase activity, however does not have specificity for 'Lys-4' of histone H3. Interacts with ZNF335. Interacts with ASH2L; the interaction is direct. Interacts with WDR5; the interaction is direct. Components of the ZNF335-RBBP5-ASH2L-WDR5 histone methylation complex may associate with components of a nuclear receptor-mediated transcription complex to form a complex at least composed of ZNF335, HCFC1, CCAR2, EMSY, MKI67, RBBP5, ASH2L and WDR5. Within this complex interacts with EMSY. Found in a complex with RBBP5, ASH2L, DPY30, KMT2A, KMT2D and WDR5. Interacts with SETD1A. Interacts with WDR82.

It localises to the nucleus. In embryonic stem (ES) cells, plays a crucial role in the differentiation potential, particularly along the neural lineage, regulating gene induction and H3 'Lys-4' methylation at key developmental loci, including that mediated by retinoic acid. Does not affect ES cell self-renewal. Component or associated component of some histone methyltransferase complexes which regulates transcription through recruitment of those complexes to gene promoters. As part of the MLL1/MLL complex, involved in mono-, di- and trimethylation at 'Lys-4' of histone H3. Histone H3 'Lys-4' methylation represents a specific tag for epigenetic transcriptional activation. In association with ASH2L and WDR5, stimulates the histone methyltransferase activities of KMT2A, KMT2B, KMT2C, KMT2D, SETD1A and SETD1B. This Mus musculus (Mouse) protein is Retinoblastoma-binding protein 5 (Rbbp5).